The following is a 268-amino-acid chain: Inositol polyphosphate multikinase (268 aa).

ATP-binding positions include K27, 86–88 (ENI), and D99. 127–135 (TSGSLGFRI) serves as a coordination point for substrate. An ATP-binding site is contributed by D235.

Belongs to the inositol phosphokinase (IPK) family.

The protein resides in the cytoplasm. The protein localises to the nucleus. It catalyses the reaction 1D-myo-inositol 1,4,5-trisphosphate + 2 ATP = 1D-myo-inositol 1,3,4,5,6-pentakisphosphate + 2 ADP + 2 H(+). It carries out the reaction 1D-myo-inositol 1,4,5-trisphosphate + ATP = 1D-myo-inositol 1,4,5,6-tetrakisphosphate + ADP + H(+). The catalysed reaction is 1D-myo-inositol 1,4,5-trisphosphate + ATP = 1D-myo-inositol 1,3,4,5-tetrakisphosphate + ADP + H(+). The enzyme catalyses 1D-myo-inositol 1,4,5,6-tetrakisphosphate + ATP = 1D-myo-inositol 1,3,4,5,6-pentakisphosphate + ADP + H(+). Inositol phosphate kinase with both monophosphoinositol and diphosphoinositol polyphosphate synthase activities. Able to phosphorylate inositol 1,4,5-trisphosphate (Ins(1,4,5)P3) on both the carbon-3 and carbon-6 positions to synthesize inositol 1,3,4,5-tetrakisphosphate (Ins(1,3,4,5)P4) and inositol 1,4,5,6-tetrakisphosphate (Ins(1,4,5,6)P4), and then to subsequently phosphorylate and convert either isomer of InsP4 to inositol 1,3,4,5,6-pentakisphosphate (Ins(1,3,4,5,6)P5). Also converts (Ins(1,3,4,5,6)P5) to InsP6. Also has a role in transcription regulation. The catalytic activity is required for PHO gene repression by phosphate and for NCR gene activation in response to nitrogen availability, indicating a role for inositol pyrophosphates in these controls. Inositol polyphosphates may be involved in the regulation of chromatin remodeling of transcription. The polypeptide is Inositol polyphosphate multikinase (arg82) (Schizosaccharomyces pombe (strain 972 / ATCC 24843) (Fission yeast)).